Reading from the N-terminus, the 134-residue chain is uncharacterized protein (134 aa).

This sequence belongs to the ycf68 family.

The protein localises to the plastid. The protein resides in the chloroplast. This is an uncharacterized protein from Saccharum hybrid (Sugarcane).